A 423-amino-acid chain; its full sequence is Carboxypeptidase B2 (423 aa).

A signal peptide spans 1–22 (MKLCSLAVLVPIVLFCEQHVFA). Positions 23–114 (FQSGQVLAAL…QISNDTVSPR (92 aa)) are cleaved as a propeptide — activation peptide. Residues N44, N73, and N85 are each glycosylated (N-linked (GlcNAc...) asparagine). N108 carries an N-linked (GlcNAc...) (complex) asparagine glycan. The Peptidase M14 domain maps to 122–419 (QYHSLNEIYS…AAVSKIAWHV (298 aa)). C178 and C191 are disulfide-bonded. Zn(2+) is bound by residues H181 and E184. Substrate contacts are provided by residues 181 to 184 (HARE) and R239. N241 is a glycosylation site (N-linked (GlcNAc...) asparagine; partial). 2 disulfide bridges follow: C250/C274 and C265/C279. Residue 256 to 257 (NR) participates in substrate binding. H310 contacts Zn(2+). Residues 311–312 (SY) and Y363 each bind substrate. The active-site Proton donor/acceptor is the E385.

It belongs to the peptidase M14 family. Requires Zn(2+) as cofactor. N-glycosylated. N-glycan at Asn-108: Hex5HexNAc4. In terms of tissue distribution, plasma; synthesized in the liver.

Its subcellular location is the secreted. The enzyme catalyses Release of C-terminal Arg and Lys from a polypeptide.. TAFI/CPB2 is unique among carboxypeptidases in that it spontaneously inactivates with a short half-life, a property that is crucial for its role in controlling blood clot lysis. The zymogen is stabilized by interactions with the activation peptide. Release of the activation peptide increases a dynamic flap mobility and in time this leads to conformational changes that disrupt the catalytic site and expose a cryptic thrombin-cleavage site present at Arg-324. Its function is as follows. Cleaves C-terminal arginine or lysine residues from biologically active peptides such as kinins or anaphylatoxins in the circulation thereby regulating their activities. Down-regulates fibrinolysis by removing C-terminal lysine residues from fibrin that has already been partially degraded by plasmin. The protein is Carboxypeptidase B2 (CPB2) of Homo sapiens (Human).